Here is a 186-residue protein sequence, read N- to C-terminus: Elongation factor P (186 aa).

It belongs to the elongation factor P family.

The protein resides in the cytoplasm. The protein operates within protein biosynthesis; polypeptide chain elongation. Involved in peptide bond synthesis. Stimulates efficient translation and peptide-bond synthesis on native or reconstituted 70S ribosomes in vitro. Probably functions indirectly by altering the affinity of the ribosome for aminoacyl-tRNA, thus increasing their reactivity as acceptors for peptidyl transferase. This Laribacter hongkongensis (strain HLHK9) protein is Elongation factor P.